A 172-amino-acid polypeptide reads, in one-letter code: Protein sym-1 (172 aa).

Helical transmembrane passes span 13–33 (PLLTQAVTTSILFGVGDVAAQ), 52–72 (MVLYGGAVFGPAATTWFRFLQ), 94–114 (GLFAPTFIGIFLGSMAVLEGT), 128–148 (LSTNWMVWPFVQMVNFKVVPL), and 152–172 (VLFVNVISIGWNCYLSWLNGQ).

Belongs to the peroxisomal membrane protein PXMP2/4 family.

It localises to the mitochondrion inner membrane. May be involved in cellular response to stress. Required to maintain mitochondrial DNA (mtDNA) integrity and stability. In Neurospora crassa (strain ATCC 24698 / 74-OR23-1A / CBS 708.71 / DSM 1257 / FGSC 987), this protein is Protein sym-1 (sym-1).